The chain runs to 550 residues: ATP-dependent RNA helicase dbp2 (550 aa).

A disordered region spans residues 1-25 (MSYRDNEYSGNYNGKEDGYNSRGRY). Positions 122-150 (TTFEEAGFPNYVLKEVKQLGFEAPTPIQQ) match the Q motif motif. The Helicase ATP-binding domain maps to 153-328 (WPMAMSGRDM…RDYLNDYIQV (176 aa)). ATP is bound at residue 166–173 (SATGSGKT). Positions 276–279 (DEAD) match the DEAD box motif. The 164-residue stretch at 340 to 503 (NIKQIVEVVD…DIDPKLEEMA (164 aa)) folds into the Helicase C-terminal domain. The interval 510–533 (RGGNYRRGGYGRGGFRRGGGYGNR) is RNA-binding RGG-box. Residues 525 to 550 (RRGGGYGNRNRGFTGSNSAPLARSRW) form a disordered region.

It belongs to the DEAD box helicase family. DDX5/DBP2 subfamily. Associates with polysomes.

The protein resides in the cytoplasm. Its subcellular location is the nucleus. It carries out the reaction ATP + H2O = ADP + phosphate + H(+). ATP-dependent RNA helicase involved nonsense-mediated mRNA decay and ribosome biogenesis through rRNA processing. The polypeptide is ATP-dependent RNA helicase dbp2 (dbp2) (Schizosaccharomyces pombe (strain 972 / ATCC 24843) (Fission yeast)).